The chain runs to 212 residues: MEITCPDWTHETAALAEGFTCVVGVDEVGRGPLAGPVTAAAVRLFPGRIPEGLNDSKKLTALRREMLAAEIHTVAEVSIAHASVEEIDRLNILQASHLAMGRALAGLPSRPDFALIDGHMVPKGLGHRCRAIVKGDALCLSIAAASIVAKVARDRIMVDLEQQHPGYGWRTNAGYGTKDHLQALLNLGPTPHHRRSFKPVHNILYQEASISP.

Residues Thr20–Ser209 form the RNase H type-2 domain. Residues Asp26, Glu27, and Asp117 each coordinate a divalent metal cation.

It belongs to the RNase HII family. Mn(2+) serves as cofactor. The cofactor is Mg(2+).

It is found in the cytoplasm. It carries out the reaction Endonucleolytic cleavage to 5'-phosphomonoester.. Endonuclease that specifically degrades the RNA of RNA-DNA hybrids. The chain is Ribonuclease HII from Cereibacter sphaeroides (strain ATCC 17029 / ATH 2.4.9) (Rhodobacter sphaeroides).